The following is a 509-amino-acid chain: Probable cytochrome P450 513A1 (509 aa).

Residues Asn2–Gln19 form a helical membrane-spanning segment. Cys454 lines the heme pocket.

This sequence belongs to the cytochrome P450 family. The cofactor is heme.

Its subcellular location is the membrane. The protein is Probable cytochrome P450 513A1 (cyp513A1) of Dictyostelium discoideum (Social amoeba).